Consider the following 835-residue polypeptide: Adhesion G protein-coupled receptor E5 (835 aa).

Positions 1–20 (MGGRVFLAFCVWLTLPGAET) are cleaved as a signal peptide. Topologically, residues 21–552 (QDSRGCARWC…EDWKLTLITR (532 aa)) are extracellular. The EGF-like 1 domain occupies 22 to 63 (DSRGCARWCPQNSSCVNATACRCNPGFSSFSEIITTPTETCD). 15 disulfide bridges follow: Cys-26–Cys-36, Cys-30–Cys-42, Cys-44–Cys-62, Cys-68–Cys-82, Cys-76–Cys-91, Cys-93–Cys-114, Cys-120–Cys-133, Cys-127–Cys-142, Cys-144–Cys-158, Cys-164–Cys-177, Cys-171–Cys-186, Cys-188–Cys-207, Cys-213–Cys-226, Cys-220–Cys-235, and Cys-237–Cys-256. Residues Asn-33 and Asn-38 are each glycosylated (N-linked (GlcNAc...) asparagine). Residues 64 to 115 (DINECATPSKVSCGKFSDCWNTEGSYDCVCSPGYEPVSGAKTFKNESENTCQ) enclose the EGF-like 2; calcium-binding domain. A glycan (N-linked (GlcNAc...) asparagine) is linked at Asn-108. Positions 116-159 (DVDECQQNPRLCKSYGTCVNTLGSYTCQCLPGFKFIPEDPKVCT) constitute an EGF-like 3; calcium-binding domain. The EGF-like 4; calcium-binding domain occupies 160–208 (DVNECTSGQNPCHSSTHCLNNVGSYQCRCRPGWQPIPGSPNGPNNTVCE). N-linked (GlcNAc...) asparagine glycosylation is present at Asn-203. The region spanning 209–257 (DVDECSSGQHQCDSSTVCFNTVGSYSCRCRPGWKPRHGIPNNQKDTVCE) is the EGF-like 5; calcium-binding domain. The 195-residue stretch at 349-543 (PFTYISPSNT…AILMAHYDVE (195 aa)) folds into the GAIN-B domain. Asn-371, Asn-406, Asn-413, Asn-453, and Asn-520 each carry an N-linked (GlcNAc...) asparagine glycan. Cystine bridges form between Cys-495–Cys-525 and Cys-513–Cys-527. The tract at residues 495 to 543 (CAFWKSDSDRGGHWATEGCQVLGSKNGSTTCQCSHLSSFAILMAHYDVE) is GPS. Residues 553 to 572 (VGLALSLFCLLLCILTFLLV) form a helical membrane-spanning segment. Residues 573-581 (RPIQGSRTT) are Cytoplasmic-facing. The chain crosses the membrane as a helical span at residues 582 to 601 (IHLHLCICLFVGSTIFLAGI). Residues 602 to 620 (ENEGGQVGLRCRLVAGLLH) are Extracellular-facing. A helical membrane pass occupies residues 621–642 (YCFLAAFCWMSLEGLELYFLVV). Topologically, residues 643–653 (RVFQGQGLSTR) are cytoplasmic. A helical membrane pass occupies residues 654–674 (WLCLIGYGVPLLIVGVSAAIY). Topologically, residues 675-691 (SKGYGRPRYCWLDFEQG) are extracellular. The helical transmembrane segment at 692–712 (FLWSFLGPVTFIILCNAVIFV) threads the bilayer. Over 713–739 (TTVWKLTQKFSEINPDMKKLKKARALT) the chain is Cytoplasmic. Residues 740-760 (ITAIAQLFLLGCTWVFGLFIF) traverse the membrane as a helical segment. Residues 761 to 766 (DDRSLV) are Extracellular-facing. The helical transmembrane segment at 767 to 789 (LTYVFTILNCLQGAFLYLLHCLL) threads the bilayer. The Cytoplasmic segment spans residues 790–835 (NKKVREEYRKWACLVAGGSKYSEFTSTTSGTGHNQTRALRASESGI). A compositionally biased stretch (polar residues) spans 814 to 826 (TSTTSGTGHNQTR). The tract at residues 814 to 835 (TSTTSGTGHNQTRALRASESGI) is disordered. At Ser-815 the chain carries Phosphoserine. Residue Thr-816 is modified to Phosphothreonine. The residue at position 818 (Ser-818) is a Phosphoserine. Thr-825 carries the phosphothreonine modification. A phosphoserine mark is found at Ser-831 and Ser-833.

It belongs to the G-protein coupled receptor 2 family. LN-TM7 subfamily. In terms of assembly, forms a heterodimer, consisting of a large extracellular region (alpha subunit) non-covalently linked to a seven-transmembrane moiety (beta subunit). Interacts with complement decay-accelerating factor (DAF). The largest isoform (isoform 1) interacts with chondroitin sulfate. In terms of processing, proteolytically cleaved into 2 subunits, an extracellular alpha subunit and a seven-transmembrane subunit. Broadly expressed, found on most hematopoietic cells, including activated lymphocytes, monocytes, macrophages, dendritic cells, and granulocytes. Expressed also abundantly by smooth muscle cells. Expressed in thyroid, colorectal, gastric, esophageal and pancreatic carcinomas too. Expression are increased under inflammatory conditions in the CNS of multiple sclerosis and in synovial tissue of patients with rheumatoid arthritis. Increased expression of CD97 in the synovium is accompanied by detectable levels of soluble CD97 in the synovial fluid.

It is found in the cell membrane. The protein localises to the secreted. The protein resides in the extracellular space. Functionally, receptor potentially involved in both adhesion and signaling processes early after leukocyte activation. Plays an essential role in leukocyte migration. The sequence is that of Adhesion G protein-coupled receptor E5 from Homo sapiens (Human).